The primary structure comprises 323 residues: MAAGRELVVSFGEMLIDFVPTVAGVSLAEAPAFLKAPGGAPANVAIAVSRLGGGAAFVGKLGDDEFGRMLAAILRDNGVDDGGVVFDSGARTALAFVTLRADGEREFMFYRNPSADMLLTADELNVELIKRAAVFHYGSISLIAEPCRTAHLRAMEIAKEAGALLSYDPNLREALWPSREEARTQILSIWDQADIVKVSEVELEFLTGIDSVEDDVVMKLWRPTMKLLLVTLGDQGCKYYARDFHGAVPSFKVQQVDTTGAGDAFVGALLQRIVKDPSSLQDEKKLVESIKFANACGAITTTKKGAIPSLPTEAEVLQLIEKA.

This sequence belongs to the carbohydrate kinase PfkB family. In terms of tissue distribution, expressed in stems, at higher levels in roots, and hardly detectable in leaves.

It carries out the reaction D-fructose + ATP = D-fructose 6-phosphate + ADP + H(+). Its pathway is glycan biosynthesis; starch biosynthesis. Its activity is regulated as follows. Inhibited at high fructose. In terms of biological role, may play an important role in maintaining the flux of carbon towards starch formation in endosperm. May also be involved in a sugar-sensing pathway. This chain is Fructokinase-1 (FRK1), found in Zea mays (Maize).